The primary structure comprises 299 residues: MSSSLRQWFARVLVLTQLINGALCWGKEGHYTVCKIAESYFEEETVAAVKKLLPKSADGDLASVCSWPDEIKHHWQWRWTSPLHYVDTPDYRCNYEYCRDCHDTHKNQDRCVTGAIFNYTMQLMSASENSDTIVHYNLTEALMFLSHFIGDIHQPLHVGFLGDEGGNTITVRWYRRKTNLHHVWDNMIIESALKTYYNKSLPLMIEALQANLTNDWSNDVPLWESCQLNQTACPNPYASESINLACKYAYRNATPGTTLGDDYFLSRLPIVEKRLAQGGIRLAATLNRIFSSKPKHAGS.

An N-terminal signal peptide occupies residues 1-24 (MSSSLRQWFARVLVLTQLINGALC). Residues tryptophan 25 and histidine 30 each contribute to the a divalent metal cation site. 25–30 (WGKEGH) is a binding site for substrate. An intrachain disulfide couples cysteine 34 to cysteine 65. Residues aspartate 69 and histidine 84 each contribute to the a divalent metal cation site. Residues 69–75 (DEIKHHW), 84–87 (HYVD), and 94–99 (NYEYCR) contribute to the substrate site. Disulfide bonds link cysteine 93/cysteine 246, cysteine 101/cysteine 111, and cysteine 226/cysteine 233. Substrate-binding residues include asparagine 118 and tyrosine 136. N-linked (GlcNAc...) asparagine glycosylation occurs at asparagine 118. Asparagine 137 carries an N-linked (GlcNAc...) asparagine glycan. Histidine 147, aspartate 151, histidine 157, histidine 181, and aspartate 185 together coordinate a divalent metal cation. The interval 147-196 (HFIGDIHQPLHVGFLGDEGGNTITVRWYRRKTNLHHVWDNMIIESALKTY) is substrate binding. N-linked (GlcNAc...) asparagine glycosylation is found at asparagine 198, asparagine 211, and asparagine 229. Residues 284-299 (ATLNRIFSSKPKHAGS) constitute a propeptide, removed in mature form.

This sequence belongs to the nuclease type I family. Monomer. It depends on Mn(2+) as a cofactor. Ca(2+) is required as a cofactor.

It catalyses the reaction Endonucleolytic cleavage to 5'-phosphomononucleotide and 5'-phosphooligonucleotide end-products.. Endonuclease that can use single-stranded RNA and DNA as substrates. In contradiction with PubMed:23620482, cannot hydrolyze single-stranded DNA and does not cleave mismatches. The chain is Endonuclease 4 from Arabidopsis thaliana (Mouse-ear cress).